The following is a 349-amino-acid chain: DNA replication and repair protein RecF (349 aa).

Position 30-37 (30-37 (GKNGSGKT)) interacts with ATP.

The protein belongs to the RecF family.

The protein localises to the cytoplasm. In terms of biological role, the RecF protein is involved in DNA metabolism; it is required for DNA replication and normal SOS inducibility. RecF binds preferentially to single-stranded, linear DNA. It also seems to bind ATP. In Francisella tularensis subsp. mediasiatica (strain FSC147), this protein is DNA replication and repair protein RecF.